The sequence spans 408 residues: Aurora kinase A-B (408 aa).

Basic and acidic residues predominate over residues 1 to 10 (MERAVKENHK). A disordered region spans residues 1–128 (MERAVKENHK…QGKTLAVPKE (128 aa)). A compositionally biased stretch (polar residues) spans 85–110 (GHQTSKPQGPNENRNPQQTSHSSTPN). Residues 140–390 (FEIGRPLGKG…LKGVLEHPWI (251 aa)) form the Protein kinase domain. ATP is bound by residues Lys-150, Lys-169, and 217–220 (LDYA). The active-site Proton acceptor is the Asp-263. Asp-281 is an ATP binding site. The activation segment stretch occupies residues 287 to 300 (HAPSSRRTTLCGTL).

It belongs to the protein kinase superfamily. Ser/Thr protein kinase family. Aurora subfamily. In terms of assembly, interacts with kif2c and kif11. Post-translationally, phosphorylated. Autophosphorylated on a serine residue.

The protein resides in the cytoplasm. It is found in the cytoskeleton. Its subcellular location is the spindle pole. The protein localises to the microtubule organizing center. It localises to the centrosome. The catalysed reaction is L-seryl-[protein] + ATP = O-phospho-L-seryl-[protein] + ADP + H(+). It carries out the reaction L-threonyl-[protein] + ATP = O-phospho-L-threonyl-[protein] + ADP + H(+). Mitotic serine/threonine kinases that contributes to the regulation of cell cycle progression. Associates with the centrosome and the spindle microtubules during mitosis and plays a critical role in various mitotic events including the establishment of mitotic spindle, centrosome duplication, centrosome separation as well as maturation, chromosomal alignment, spindle assembly checkpoint, and cytokinesis. Phosphorylates numerous target proteins. Important for microtubule formation and/or stabilization. The sequence is that of Aurora kinase A-B (aurka-b) from Xenopus laevis (African clawed frog).